The sequence spans 194 residues: uncharacterized protein (194 aa).

An N-terminal signal peptide occupies residues 1 to 15 (MFVLSIALLSCTTLC). In terms of domain architecture, PAN spans 49-134 (CPQGLHADAI…KATYYEKIRC (86 aa)). 2 cysteine pairs are disulfide-bonded: Cys-49–Cys-134 and Cys-79–Cys-106.

This is an uncharacterized protein from Caenorhabditis elegans.